The following is a 341-amino-acid chain: Glycerol-3-phosphate dehydrogenase [NAD(P)+] (341 aa).

Ser11, Trp12, Arg33, and Lys106 together coordinate NADPH. Lys106, Gly137, and Ser139 together coordinate sn-glycerol 3-phosphate. Ala141 lines the NADPH pocket. Positions 192, 245, 255, 256, and 257 each coordinate sn-glycerol 3-phosphate. Lys192 (proton acceptor) is an active-site residue. Arg256 serves as a coordination point for NADPH. Val280 and Glu282 together coordinate NADPH.

Belongs to the NAD-dependent glycerol-3-phosphate dehydrogenase family.

Its subcellular location is the cytoplasm. The catalysed reaction is sn-glycerol 3-phosphate + NAD(+) = dihydroxyacetone phosphate + NADH + H(+). The enzyme catalyses sn-glycerol 3-phosphate + NADP(+) = dihydroxyacetone phosphate + NADPH + H(+). The protein operates within membrane lipid metabolism; glycerophospholipid metabolism. In terms of biological role, catalyzes the reduction of the glycolytic intermediate dihydroxyacetone phosphate (DHAP) to sn-glycerol 3-phosphate (G3P), the key precursor for phospholipid synthesis. This chain is Glycerol-3-phosphate dehydrogenase [NAD(P)+], found in Bacillus cytotoxicus (strain DSM 22905 / CIP 110041 / 391-98 / NVH 391-98).